Here is a 2463-residue protein sequence, read N- to C-terminus: MVNLVYVCMKINNSVVMVGLYYGFISAFSIGSSYLFLLRPRFLNDDPDAIEKKASETAGFFTGQLLIFISILYGPLHLALGRPHTILLLLAPYFFFHYLFSNSGQWPSQRFAFPLLTKSMRNRRFQLVFLNNLLFQLFSLSLLGRPMLTRLSYIYIFRCNNKMLFVLSSFVGWLIGHILVLKWAGLVFVWLLQVIRSKTMKYITCNVLIPATKYIIEKWRNSFVAGLIREILAMKQVESALVRIKNSKLLDDARWWIRGSSLISGLKINIRFYARLILRGFENVYVGAKFRQDMEHLFSIILFAIFLLYLDQTPLLYADPADKKLQLQRKLSNETQAARAEKKLEERLTKKFEAQRRAQRAAQRQALQEFKQGVVESYLAKQVAKDANQIQAQKDEKQIQAEQKARRIRAEQVVQYTFWLIEAQRREMEIEAARAMQEAYKGMLAAQEGYVEEGVQEKQEGFPEELISPSPIFHSEEREENPKLLILKEKISILKKKISILKKKISILKEKNDLFSFEIPIITSLFDPQKPLRPLRYIKTCAGVEKAVKNEMSQYFFYACRSDGKQRICFTYPPSLATFWEMIQRKMASRFPRIYAKAKWRALRWSAPGSYRQWISRNKKKKNSLSTEFQNRIKTLDKKKSLLNVLARRKRSSLLNVLARRKRSSLQNVLETRKRLCNYKTNKTKKEYLPEKEYLPEIADPFLTGALRGKSDPEVDDGGRKTSDLIKVVFLKNNITMATLRNKNDDDLREQKNAIALLSRMKNPVNKLHLLFVNERDYPFVKTLVNRINGPAVPKKKKKISKSKQKNVKSKQKNVKSKQKNVKSKQKNVKSKQNEIKRKVNEIKRKVNEIKRKQNESYPRGVKFGATPKTEINPHGIRFDAATIEKYSFATGYSYSPPSFDDILFHAFVTEPQRNKKAVIELEEEINKKVPRWSYQLIDELEQLEGAEGETQFSDHEIRILPFKRVAVFTEKDSKKRKPLIDEQGNFVRHRKTYAIRFLGHMSDFRRGLIKGSARQDRRKAYVCRTTQVNARSPLFALGPRTFLDGLVNLAVQVKFFYETRIKGEKIVDDDDDNEKDEFKVMIPDTKSIVAETREMLKQAGAEDGQSYEDVEDDIRIENVTEMWENIDYGQVIRTFILLLHIFLRKKVVFPAFIIGKNIARMLLLQATEWKIDFARLKRERYAICTYNGMKVSEKIAFDQFPPDWADDGIQILVTNPFYLKPWYRSKTRSIQKDPKKEKDPKKEKGPKKEPWYRFKTRFIQKDPKKEKGPKKEKGPKKEPWYRRFFFQKDPKKEKGPKKGKAQFEGDRGVRFLTSFGILTDRPFGDLITPDWGVFFNPIRNELKKKIRQFEKKHSIILSKRFRNVLKKTKKWFIKSFLFLKRARLKRHPIELSGGRETPEFTRSQKDIDNLKNEQDFRMSRNPRISESLLQGPVRALKDDSLPEEKVADPEKEPSDLDNELRAVWDEIDKVTKERKKIVFTPKPDSPDKLVQAKKNILKKLERIKSRRHKFYFLRIRKSYYVLLFFIKRISRNIKRIYLNPLERAISIRKIHPQRFFEFSKKMIEKSIGIGKTETNKETVYKTKKKKKKKNPFISIFKESLYDKDIRISENDIKLGDTWNGYKYKRKKATDTSDLASMSQAYVFYKLYQTQQTQLIHLDKLRYVLQYDGTSRFLKKELKDYFEAQELFHSKLKHKNSLNSGKNQWKNWLKAQHQYSVSPIIWNSLSPQKWRTKVNQERMDENTDLNKRYSNEKRKQFFEANSLDDEENVVETYLGQRAGDIKNSIKSYSYDLFSYQSINSEDKYVCINNKQKNSYNYNRRKVNLVDSPEGIALSNQFLVQNDLLDLYTFPDRKYVPWRLFPGSLIGGNDKDKDRFVKMWTATNSGNAVKYWTAANGNTSIKPGVFWTFQNSQRTKKQNPLFDWRGMNTELPNRCISDLKGWFFFSELLKLDLRYQVKPWILSKNLLFENLIFENQEENPNLIQNPIEDGRKNVIQNENENDPIEDGRQNVIQNENENAIQNLIDFFLEKKNSPKDTNQELHAQAKARIWDALVASLKQKREQKERKNKRIAQLIEKKKQKEIEKQKRKIEKQKRKKEKIENAKKKIENEKKKIETEEEKIEKEKRKKERKKEKLKKKVAKNIEKLKNKVAKNVAKNIEKLKKQRAKNIARMEEEDKKARKKRKRKVQVQENKIPYTAFGSDKWQRPIAEYPKSGDIRNFQVILPEDDDEDDEEDRLDELKLNAYELSRIQKITDEKRMKRNLLSSIKRERLKMEFSTRNNSLATIMLTHGIFSIEPLRISRQNQDASFLIYQLIKISLVEQLDPYDHNDSFELTEKYRARRNFFMPKTNAETMHKSDSDLFVPETILSTKRRRELRILISFYSRRGKRKNRIYKNPVFWKYVKNCGEVVDNSEKKKKKLIKSFLWPNYRLEDLACMNRYWFNAQNGSRFSMLRIRMYPRLKIR.

The next 6 membrane-spanning stretches (helical) occupy residues 18–38, 60–80, 86–106, 127–147, 170–190, and 297–317; these read VGLYYGFISAFSIGSSYLFLL, FFTGQLLIFISILYGPLHLAL, ILLLLAPYFFFHYLFSNSGQW, LVFLNNLLFQLFSLSLLGRPM, FVGWLIGHILVLKWAGLVFVW, and LFSIILFAIFLLYLDQTPLLY. A coiled-coil region spans residues 326 to 441; that stretch reads QLQRKLSNET…AARAMQEAYK (116 aa). 5 disordered regions span residues 792-841, 1230-1249, 1393-1417, 2116-2136, and 2162-2187; these read AVPK…RKVN, SIQKDPKKEKDPKKEKGPKK, SGGRETPEFTRSQKDIDNLKNEQDF, EEEKIEKEKRKKERKKEKLKK, and KQRAKNIARMEEEDKKARKKRKRKVQ. A compositionally biased stretch (basic residues) spans 794 to 830; the sequence is PKKKKKISKSKQKNVKSKQKNVKSKQKNVKSKQKNVK. Composition is skewed to basic and acidic residues over residues 832-841, 1231-1249, and 1397-1417; these read KQNEIKRKVN, IQKDPKKEKDPKKEKGPKK, and ETPEFTRSQKDIDNLKNEQDF. A coiled-coil region spans residues 2049–2192; it reads WDALVASLKQ…KRKVQVQENK (144 aa). Residues 2124-2136 are compositionally biased toward basic residues; that stretch reads KRKKERKKEKLKK.

The protein belongs to the TIC214 family. In terms of assembly, part of the Tic complex.

It is found in the plastid. The protein resides in the chloroplast inner membrane. Functionally, involved in protein precursor import into chloroplasts. May be part of an intermediate translocation complex acting as a protein-conducting channel at the inner envelope. The sequence is that of Protein TIC 214 from Oenothera elata subsp. hookeri (Hooker's evening primrose).